The chain runs to 455 residues: UDP-N-acetylmuramoylalanine--D-glutamate ligase (455 aa).

Position 112–118 (112–118 (GTNGKTT)) interacts with ATP.

The protein belongs to the MurCDEF family.

The protein localises to the cytoplasm. It carries out the reaction UDP-N-acetyl-alpha-D-muramoyl-L-alanine + D-glutamate + ATP = UDP-N-acetyl-alpha-D-muramoyl-L-alanyl-D-glutamate + ADP + phosphate + H(+). It participates in cell wall biogenesis; peptidoglycan biosynthesis. Functionally, cell wall formation. Catalyzes the addition of glutamate to the nucleotide precursor UDP-N-acetylmuramoyl-L-alanine (UMA). The protein is UDP-N-acetylmuramoylalanine--D-glutamate ligase of Trichormus variabilis (strain ATCC 29413 / PCC 7937) (Anabaena variabilis).